Reading from the N-terminus, the 154-residue chain is 6,7-dimethyl-8-ribityllumazine synthase (154 aa).

Residues Trp-22, 56-58, and 80-82 each bind 5-amino-6-(D-ribitylamino)uracil; these read AWE and CVI. 85 to 86 lines the (2S)-2-hydroxy-3-oxobutyl phosphate pocket; it reads DT. His-88 (proton donor) is an active-site residue. Position 113 (Asn-113) interacts with 5-amino-6-(D-ribitylamino)uracil. Arg-127 contacts (2S)-2-hydroxy-3-oxobutyl phosphate.

The protein belongs to the DMRL synthase family. As to quaternary structure, forms an icosahedral capsid composed of 60 subunits, arranged as a dodecamer of pentamers.

The catalysed reaction is (2S)-2-hydroxy-3-oxobutyl phosphate + 5-amino-6-(D-ribitylamino)uracil = 6,7-dimethyl-8-(1-D-ribityl)lumazine + phosphate + 2 H2O + H(+). The protein operates within cofactor biosynthesis; riboflavin biosynthesis; riboflavin from 2-hydroxy-3-oxobutyl phosphate and 5-amino-6-(D-ribitylamino)uracil: step 1/2. Catalyzes the formation of 6,7-dimethyl-8-ribityllumazine by condensation of 5-amino-6-(D-ribitylamino)uracil with 3,4-dihydroxy-2-butanone 4-phosphate. This is the penultimate step in the biosynthesis of riboflavin. This is 6,7-dimethyl-8-ribityllumazine synthase from Xanthomonas oryzae pv. oryzae (strain MAFF 311018).